Consider the following 344-residue polypeptide: Tryptophan--tRNA ligase (344 aa).

Residues 20-22 and 28-29 each bind ATP; these read QPS and GN. The short motif at 21–29 is the 'HIGH' region element; sequence PSGALHLGN. Asp144 contacts L-tryptophan. ATP-binding positions include 156–158, Val197, and 206–210; these read GED and KMSKS. Positions 206-210 match the 'KMSKS' region motif; that stretch reads KMSKS.

The protein belongs to the class-I aminoacyl-tRNA synthetase family. Homodimer.

The protein localises to the cytoplasm. It carries out the reaction tRNA(Trp) + L-tryptophan + ATP = L-tryptophyl-tRNA(Trp) + AMP + diphosphate + H(+). Its function is as follows. Catalyzes the attachment of tryptophan to tRNA(Trp). The sequence is that of Tryptophan--tRNA ligase from Caulobacter vibrioides (strain ATCC 19089 / CIP 103742 / CB 15) (Caulobacter crescentus).